A 468-amino-acid polypeptide reads, in one-letter code: 6-phospho-beta-galactosidase (468 aa).

D-galactose 6-phosphate-binding residues include glutamine 19, histidine 116, asparagine 159, glutamate 160, and asparagine 297. Glutamate 160 (proton donor) is an active-site residue. The active-site Nucleophile is glutamate 375. Residues serine 428, tryptophan 429, lysine 435, and tyrosine 437 each coordinate D-galactose 6-phosphate.

It belongs to the glycosyl hydrolase 1 family.

The enzyme catalyses a 6-phospho-beta-D-galactoside + H2O = D-galactose 6-phosphate + an alcohol. Its pathway is carbohydrate metabolism; lactose degradation; D-galactose 6-phosphate and beta-D-glucose from lactose 6-phosphate: step 1/1. The protein is 6-phospho-beta-galactosidase of Streptococcus mutans serotype c (strain ATCC 700610 / UA159).